Consider the following 654-residue polypeptide: Transcription factor E2-alpha (654 aa).

The 9aaTAD signature appears at 19 to 27 (LLDFSMMFP). The disordered stretch occupies residues 31 to 103 (TNGKGRPASL…LGPGLGGKSG (73 aa)). Positions 55 to 68 (SSGSWGSGDQSSSS) are enriched in low complexity. Residues 69 to 79 (FDPSRTFSEGT) are compositionally biased toward polar residues. The span at 84-94 (SHSSLSSSTFL) shows a compositional bias: low complexity. A phosphoserine mark is found at Ser134 and Ser139. Disordered stretches follow at residues 135-205 (PGPL…SAKT), 239-268 (MLGG…FGGL), 292-329 (SFSS…GSSG), and 343-385 (DHSS…YDGG). Residues 147–156 (SQYYPSYSGS) are compositionally biased toward low complexity. The Nuclear localization signal motif lies at 170 to 176 (PKKVRKV). The segment covering 256–268 (VGSSGSSSTFGGL) has biased composition (low complexity). Residues 343–354 (DHSSNNFSSSPS) show a composition bias toward low complexity. At Thr355 the chain carries Phosphothreonine. Ser359 carries the post-translational modification Phosphoserine. Omega-N-methylarginine is present on Arg371. A Phosphoserine modification is found at Ser379. Residues 389–425 (LQSKIEDHLDEAIHVLRSHAVGTAGDMHTLLPGHGAL) are leucine-zipper. The tract at residues 461–552 (NHAALPSQPG…KAEREKERRV (92 aa)) is disordered. Lys498 participates in a covalent cross-link: Glycyl lysine isopeptide (Lys-Gly) (interchain with G-Cter in SUMO2). A compositionally biased stretch (basic and acidic residues) spans 512–523 (DHSEEEKKELKA). Position 529 is a phosphoserine (Ser529). Asp531 is subject to Phosphothreonine. Basic and acidic residues predominate over residues 542–552 (QKAEREKERRV). The bHLH domain maps to 549 to 602 (ERRVANNARERLRVRDINEAFKELGRMCQLHLNSEKPQTKLLILHQAVSVILNL). A Glycyl lysine isopeptide (Lys-Gly) (interchain with G-Cter in SUMO2) cross-link involves residue Lys625. The interval 633-654 (PQMVLSAPHPGLSEAHNPAGHM) is disordered.

As to quaternary structure, homodimer. Heterodimer; efficient DNA binding requires dimerization with another bHLH protein. Forms a heterodimer with ASH1, TWIST1 and TWIST2. Forms a heterodimer with MYOG; heterodimerization enhances MYOG DNA-binding and transcriptional activities. Forms a heterodimer with NEUROD1; the heterodimer is inhibited in presence of ID2, but not NR0B2, to E-box element. Forms a heterodimer with TCF15; the heterodimer binds E-box element. Forms a heterodimer with ATOH8; repress transcription of TCF3 and TCF3/NEUROG3 dimer-induced transactivation of E box-dependent promoters. Component of a nuclear TAL-1 complex composed at least of CBFA2T3, LDB1, TAL1 and TCF3. Interacts with NEUROD2, PTF1A and TGFB1I1. Interacts with EP300 and UBE2I. Interacts with BHLHA9. Interacts with ASB2; the interaction is mediated by SKP2 and targets TCF3 for Notch-induced proteasomal degradation. Forms a heterodimer with ATOH7; required for ATOH7 DNA-binding. In terms of assembly, interacts with RALGAPA1 and FIGLA. In terms of processing, phosphorylated following NGF stimulation. Undergoes Notch-induced ubiquitination and subsequent proteasomal degradation which is mediated by ASB1 or ASB2, the substrate-recognition components of probable ECS E3 ubiquitin-protein ligase complexes.

It is found in the nucleus. Transcriptional regulator involved in the initiation of neuronal differentiation and mesenchymal to epithelial transition. Heterodimers between TCF3 and tissue-specific basic helix-loop-helix (bHLH) proteins play major roles in determining tissue-specific cell fate during embryogenesis, like muscle or early B-cell differentiation. Together with TCF15, required for the mesenchymal to epithelial transition. Dimers bind DNA on E-box motifs: 5'-CANNTG-3'. Binds to the kappa-E2 site in the kappa immunoglobulin gene enhancer. Binds to IEB1 and IEB2, which are short DNA sequences in the insulin gene transcription control region. In terms of biological role, facilitates ATOH7 binding to DNA at the consensus sequence 5'-CAGGTG-3', and positively regulates transcriptional activity. In Homo sapiens (Human), this protein is Transcription factor E2-alpha (TCF3).